Reading from the N-terminus, the 368-residue chain is Protein L-Myc (368 aa).

Disordered regions lie at residues 39 to 79 (PPTS…RGHS), 112 to 179 (RLAP…EKRR), and 218 to 295 (FPPE…FLER). Residues 135-147 (LEASNPAPATQCQ) are compositionally biased toward polar residues. Acidic residues predominate over residues 247-258 (EEEEEEEEEEEI). Basic and acidic residues predominate over residues 283–294 (DVTKRKNHNFLE). Residues 285–337 (TKRKNHNFLERKRRNDLRSRFLALRDQVPTLASCSKAPKVVILSKALEYLQAL) form the bHLH domain. The interval 337–365 (LVGAEKKMATEKRQLRCRQQQLQKRIAYL) is leucine-zipper.

In terms of assembly, efficient DNA binding requires dimerization with another bHLH protein. Binds DNA as a heterodimer with MAX.

The protein resides in the nucleus. This chain is Protein L-Myc (Mycl), found in Mus musculus (Mouse).